A 414-amino-acid chain; its full sequence is Ciliary microtubule-associated protein 2 (414 aa).

This chain is Ciliary microtubule-associated protein 2 (Cimap2), found in Mus musculus (Mouse).